We begin with the raw amino-acid sequence, 553 residues long: CTP synthase (553 aa).

The amidoligase domain stretch occupies residues 1–270 (MTKYVFVTGG…DDLICRELEL (270 aa)). Serine 13 contacts CTP. Residue serine 13 participates in UTP binding. Residues 14–19 (SLGKGI) and aspartate 71 each bind ATP. 2 residues coordinate Mg(2+): aspartate 71 and glutamate 144. CTP-binding positions include 151 to 153 (DIE), 191 to 196 (KTKPTQ), and lysine 227. Residues 191 to 196 (KTKPTQ) and lysine 227 contribute to the UTP site. Residues 295–547 (TIGMVGKYVE…IKAALIHQDA (253 aa)) form the Glutamine amidotransferase type-1 domain. Glycine 356 serves as a coordination point for L-glutamine. Cysteine 383 serves as the catalytic Nucleophile; for glutamine hydrolysis. Residues 384–387 (LGMQ), glutamate 407, and arginine 473 each bind L-glutamine. Active-site residues include histidine 520 and glutamate 522.

The protein belongs to the CTP synthase family. As to quaternary structure, homotetramer.

It carries out the reaction UTP + L-glutamine + ATP + H2O = CTP + L-glutamate + ADP + phosphate + 2 H(+). The enzyme catalyses L-glutamine + H2O = L-glutamate + NH4(+). The catalysed reaction is UTP + NH4(+) + ATP = CTP + ADP + phosphate + 2 H(+). Its pathway is pyrimidine metabolism; CTP biosynthesis via de novo pathway; CTP from UDP: step 2/2. Its activity is regulated as follows. Allosterically activated by GTP, when glutamine is the substrate; GTP has no effect on the reaction when ammonia is the substrate. The allosteric effector GTP functions by stabilizing the protein conformation that binds the tetrahedral intermediate(s) formed during glutamine hydrolysis. Inhibited by the product CTP, via allosteric rather than competitive inhibition. Functionally, catalyzes the ATP-dependent amination of UTP to CTP with either L-glutamine or ammonia as the source of nitrogen. Regulates intracellular CTP levels through interactions with the four ribonucleotide triphosphates. In Polynucleobacter asymbioticus (strain DSM 18221 / CIP 109841 / QLW-P1DMWA-1) (Polynucleobacter necessarius subsp. asymbioticus), this protein is CTP synthase.